A 545-amino-acid chain; its full sequence is Putative transcription factor ecdB (545 aa).

A DNA-binding region (zn(2)-C6 fungal-type) is located at residues 12–39 (CDACRSRRVKCDGQRPSCMGCLSRGLDC). The interval 79–99 (PPPVLLASARPSSNPLSSHED) is disordered.

The protein localises to the nucleus. The polypeptide is Putative transcription factor ecdB (Aspergillus rugulosus (Emericella rugulosa)).